Reading from the N-terminus, the 205-residue chain is MIGRLNGILVEKQPPEILLEVSGVGYEVQMPMTCFYDLPKVGESAIVYTHFVVREDAQLLFGFNNKVERALFRELLKANGVGPKLGLAILSGMSAQQFVSCVNNEDSTSLVKLPGVGKKTAERLVLEMKDRLKNWGNDLFTPFSDSAVIEPFSDATIANNAADDAVSALVSLGYKLPQAQKAVKSVSKPDMSTEVLIKESLKSML.

The interval M1–N64 is domain I. Residues N65–F143 are domain II. The flexible linker stretch occupies residues S144–T156. The domain III stretch occupies residues I157–L205.

It belongs to the RuvA family. As to quaternary structure, homotetramer. Forms an RuvA(8)-RuvB(12)-Holliday junction (HJ) complex. HJ DNA is sandwiched between 2 RuvA tetramers; dsDNA enters through RuvA and exits via RuvB. An RuvB hexamer assembles on each DNA strand where it exits the tetramer. Each RuvB hexamer is contacted by two RuvA subunits (via domain III) on 2 adjacent RuvB subunits; this complex drives branch migration. In the full resolvosome a probable DNA-RuvA(4)-RuvB(12)-RuvC(2) complex forms which resolves the HJ.

The protein localises to the cytoplasm. In terms of biological role, the RuvA-RuvB-RuvC complex processes Holliday junction (HJ) DNA during genetic recombination and DNA repair, while the RuvA-RuvB complex plays an important role in the rescue of blocked DNA replication forks via replication fork reversal (RFR). RuvA specifically binds to HJ cruciform DNA, conferring on it an open structure. The RuvB hexamer acts as an ATP-dependent pump, pulling dsDNA into and through the RuvAB complex. HJ branch migration allows RuvC to scan DNA until it finds its consensus sequence, where it cleaves and resolves the cruciform DNA. This Pseudoalteromonas translucida (strain TAC 125) protein is Holliday junction branch migration complex subunit RuvA.